The primary structure comprises 677 residues: UvrABC system protein B (677 aa).

A Helicase ATP-binding domain is found at 27 to 414; it reads ANLGHGVRDQ…SQGVIAEQII (388 aa). 40-47 is an ATP binding site; it reads GVTGSGKT. The short motif at 93-116 is the Beta-hairpin element; the sequence is YYDYYQPEAYVPASDTYIEKDSSI. Residues 432–594 enclose the Helicase C-terminal domain; sequence QVDDLLAECR…IEPRTIRKSL (163 aa). Positions 638–673 constitute a UVR domain; sequence AKHIQKLEREMREAAKELEFERAATLRDRIRLLRER.

This sequence belongs to the UvrB family. In terms of assembly, forms a heterotetramer with UvrA during the search for lesions. Interacts with UvrC in an incision complex.

The protein localises to the cytoplasm. The UvrABC repair system catalyzes the recognition and processing of DNA lesions. A damage recognition complex composed of 2 UvrA and 2 UvrB subunits scans DNA for abnormalities. Upon binding of the UvrA(2)B(2) complex to a putative damaged site, the DNA wraps around one UvrB monomer. DNA wrap is dependent on ATP binding by UvrB and probably causes local melting of the DNA helix, facilitating insertion of UvrB beta-hairpin between the DNA strands. Then UvrB probes one DNA strand for the presence of a lesion. If a lesion is found the UvrA subunits dissociate and the UvrB-DNA preincision complex is formed. This complex is subsequently bound by UvrC and the second UvrB is released. If no lesion is found, the DNA wraps around the other UvrB subunit that will check the other stand for damage. The sequence is that of UvrABC system protein B from Nitratidesulfovibrio vulgaris (strain ATCC 29579 / DSM 644 / CCUG 34227 / NCIMB 8303 / VKM B-1760 / Hildenborough) (Desulfovibrio vulgaris).